The chain runs to 161 residues: SsrA-binding protein (161 aa).

Positions 137–161 are disordered; sequence HDKRTDSKEKDWNRDKARIMKSSLR. The segment covering 139 to 154 has biased composition (basic and acidic residues); it reads KRTDSKEKDWNRDKAR.

The protein belongs to the SmpB family.

The protein resides in the cytoplasm. Its function is as follows. Required for rescue of stalled ribosomes mediated by trans-translation. Binds to transfer-messenger RNA (tmRNA), required for stable association of tmRNA with ribosomes. tmRNA and SmpB together mimic tRNA shape, replacing the anticodon stem-loop with SmpB. tmRNA is encoded by the ssrA gene; the 2 termini fold to resemble tRNA(Ala) and it encodes a 'tag peptide', a short internal open reading frame. During trans-translation Ala-aminoacylated tmRNA acts like a tRNA, entering the A-site of stalled ribosomes, displacing the stalled mRNA. The ribosome then switches to translate the ORF on the tmRNA; the nascent peptide is terminated with the 'tag peptide' encoded by the tmRNA and targeted for degradation. The ribosome is freed to recommence translation, which seems to be the essential function of trans-translation. This is SsrA-binding protein from Aliivibrio salmonicida (strain LFI1238) (Vibrio salmonicida (strain LFI1238)).